The sequence spans 392 residues: 4-hydroxybenzoate polyprenyltransferase, mitochondrial (392 aa).

Residues 1–22 (MYALRHLRLQSARHFRSSYAAA) constitute a mitochondrion transit peptide. 9 consecutive transmembrane segments (helical) span residues 90-110 (IGTYLLFWPCAWSIALSADAG), 115-135 (LTMLGLFGTGALIMRGAGCTI), 163-183 (FDAIVFLSAQLSLGLLVLVQL), 184-204 (NWQSILLGASSLGLVITYPLM), 207-227 (VTYWPQLVLGMAFNWGALLGW), 236-256 (LAACLPLYLSGVCWTIVYDTI), 283-303 (VWLSGFTAAMLTGLSAAGWAC), 307-327 (VPYYAAVGVVGAHLVQQIYSL), and 339-359 (FISNHQVGLILFLGIVLGTLL). The tract at residues 365–392 (KKQRQSSLTTSTASSYVPALPQKPEVLS) is disordered. Positions 369 to 379 (QSSLTTSTASS) are enriched in polar residues.

This sequence belongs to the UbiA prenyltransferase family. Mg(2+) is required as a cofactor.

Its subcellular location is the mitochondrion inner membrane. The catalysed reaction is an all-trans-polyprenyl diphosphate + 4-hydroxybenzoate = a 4-hydroxy-3-(all-trans-polyprenyl)benzoate + diphosphate. It participates in cofactor biosynthesis; ubiquinone biosynthesis. Its function is as follows. Catalyzes the prenylation of para-hydroxybenzoate (PHB) with an all-trans polyprenyl group. Mediates the second step in the final reaction sequence of coenzyme Q (CoQ) biosynthesis, which is the condensation of the polyisoprenoid side chain with PHB, generating the first membrane-bound Q intermediate. This Drosophila melanogaster (Fruit fly) protein is 4-hydroxybenzoate polyprenyltransferase, mitochondrial.